The chain runs to 492 residues: Fascin-2 (492 aa).

This sequence belongs to the fascin family. Localized specifically in the outer and inner segments of the photoreceptor cells in the retina.

Its subcellular location is the cytoplasm. It is found in the cytoskeleton. It localises to the cell projection. The protein resides in the stereocilium. Functionally, acts as an actin bundling protein. May play a pivotal role in photoreceptor cell-specific events, such as disk morphogenesis. This chain is Fascin-2 (FSCN2), found in Homo sapiens (Human).